Consider the following 468-residue polypeptide: ATP synthase subunit beta (468 aa).

Residue 155-162 (GGAGVGKT) coordinates ATP.

This sequence belongs to the ATPase alpha/beta chains family. F-type ATPases have 2 components, CF(1) - the catalytic core - and CF(0) - the membrane proton channel. CF(1) has five subunits: alpha(3), beta(3), gamma(1), delta(1), epsilon(1). CF(0) has three main subunits: a(1), b(2) and c(9-12). The alpha and beta chains form an alternating ring which encloses part of the gamma chain. CF(1) is attached to CF(0) by a central stalk formed by the gamma and epsilon chains, while a peripheral stalk is formed by the delta and b chains.

The protein localises to the cell inner membrane. It carries out the reaction ATP + H2O + 4 H(+)(in) = ADP + phosphate + 5 H(+)(out). Functionally, produces ATP from ADP in the presence of a proton gradient across the membrane. The catalytic sites are hosted primarily by the beta subunits. The polypeptide is ATP synthase subunit beta (Leptospira biflexa serovar Patoc (strain Patoc 1 / ATCC 23582 / Paris)).